Here is a 150-residue protein sequence, read N- to C-terminus: SsrA-binding protein (150 aa).

It belongs to the SmpB family.

The protein localises to the cytoplasm. In terms of biological role, required for rescue of stalled ribosomes mediated by trans-translation. Binds to transfer-messenger RNA (tmRNA), required for stable association of tmRNA with ribosomes. tmRNA and SmpB together mimic tRNA shape, replacing the anticodon stem-loop with SmpB. tmRNA is encoded by the ssrA gene; the 2 termini fold to resemble tRNA(Ala) and it encodes a 'tag peptide', a short internal open reading frame. During trans-translation Ala-aminoacylated tmRNA acts like a tRNA, entering the A-site of stalled ribosomes, displacing the stalled mRNA. The ribosome then switches to translate the ORF on the tmRNA; the nascent peptide is terminated with the 'tag peptide' encoded by the tmRNA and targeted for degradation. The ribosome is freed to recommence translation, which seems to be the essential function of trans-translation. The sequence is that of SsrA-binding protein from Campylobacter jejuni subsp. jejuni serotype O:6 (strain 81116 / NCTC 11828).